Here is a 267-residue protein sequence, read N- to C-terminus: Small ribosomal subunit protein uS3 (267 aa).

Residues 39-114 (IRKYLETNLK…RVNINIVEIR (76 aa)) form the KH type-2 domain. Over residues 229–248 (ANNRGRGNNRGRGNSRQNGG) the composition is skewed to low complexity. A disordered region spans residues 229–267 (ANNRGRGNNRGRGNSRQNGGRSRRPRQGQASTQGRGGNN).

The protein belongs to the universal ribosomal protein uS3 family. As to quaternary structure, part of the 30S ribosomal subunit. Forms a tight complex with proteins S10 and S14.

Its function is as follows. Binds the lower part of the 30S subunit head. Binds mRNA in the 70S ribosome, positioning it for translation. The polypeptide is Small ribosomal subunit protein uS3 (Oenococcus oeni (strain ATCC BAA-331 / PSU-1)).